The primary structure comprises 229 residues: Endonuclease V (229 aa).

The protein belongs to the endonuclease V family.

The protein localises to the cytoplasm. The catalysed reaction is Endonucleolytic cleavage at apurinic or apyrimidinic sites to products with a 5'-phosphate.. Functionally, DNA repair enzyme involved in the repair of deaminated bases. Selectively cleaves double-stranded DNA at the second phosphodiester bond 3' to a deoxyinosine leaving behind the intact lesion on the nicked DNA. The sequence is that of Endonuclease V from Methanopyrus kandleri (strain AV19 / DSM 6324 / JCM 9639 / NBRC 100938).